Here is a 332-residue protein sequence, read N- to C-terminus: Cell growth regulator with RING finger domain protein 1 (332 aa).

Residues Cys274–Arg309 form an RING-type zinc finger.

In terms of tissue distribution, highly expressed in testis, lower levels of expression is seen in skeletal muscle, liver, lung and brain.

The protein localises to the nucleus. It is found in the endoplasmic reticulum. Functionally, able to inhibit growth in several cell lines. The sequence is that of Cell growth regulator with RING finger domain protein 1 (Cgrrf1) from Rattus norvegicus (Rat).